The sequence spans 503 residues: Zinc finger protein JACKDAW (503 aa).

The segment covering 32–51 (IPDLNPNSNPNPNAKPNSSS) has biased composition (low complexity). The tract at residues 32–68 (IPDLNPNSNPNPNAKPNSSSAKKKRNQPGTPDPDADV) is disordered. S72 bears the Phosphoserine mark. 2 consecutive C2H2-type zinc fingers follow at residues 82-104 (FVCE…RRGH) and 124-154 (YICP…SRKH). Short sequence motifs (nuclear localization signal) lie at residues 100–107 (HRRGHNLP) and 146–153 (IKKHYSRK). Residues 159 to 182 (WKCEKCSKKYAVQSDWKAHAKTCG) form a C2H2-type 2; degenerate zinc finger. Zn(2+)-binding residues include C161, C164, H177, C181, C188, C190, H203, and C207. A CCHC-type 2; atypical zinc finger spans residues 186 to 209 (YKCDCGTLFSRKDSFITHRAFCDA). The tract at residues 196 to 208 (RKDSFITHRAFCD) is SHR-binding. 2 disordered regions span residues 301-417 (SSSS…SSPM) and 432-465 (RENH…LNPA). Low complexity predominate over residues 319–358 (TSTNPSLTLSSSSTSQQTSASLQHQTLKDSSFSPLFSSSS). The span at 381 to 392 (MGSTRSNSSTAP) shows a compositional bias: polar residues. The segment covering 396-407 (AGPTMTSSSATA) has biased composition (low complexity). Polar residues predominate over residues 444 to 465 (GVSTSSVDNNPFQSNRSGLNPA).

As to quaternary structure, interacts with SHR, SCR, MGP and itself. The heterodimer with SHR involves its zinc fingers. Interacts with SIEL. Binds to RGA and SCL3 competitively in the nucleus. Expressed in the quiescent center, the ground tissue stem cells and to a lesser extent in mature cortex and endodermis cells.

Its subcellular location is the nucleus. In terms of biological role, transcription factor that, together with BIB, regulates tissue boundaries and asymmetric cell division by a rapid up-regulation of 'SCARECROW' (SCR), thus controlling the nuclear localization of 'SHORT-ROOT' (SHR) and restricting its action. Binds DNA via its zinc fingers. Recognizes and binds to SCL3 promoter sequence 5'-AGACAA-3' to promote its expression when in complex with RGA. Confines CYCD6 expression to the cortex-endodermis initial/daughter (CEI/CEID) tissues. Required for radial patterning and stem cell maintenance. Counteracted by 'MAGPIE' (MGP). Binds to the SCR and MGP promoter sequences. Controls position-dependent signals that regulate epidermal-cell-type patterning. The chain is Zinc finger protein JACKDAW from Arabidopsis thaliana (Mouse-ear cress).